Consider the following 498-residue polypeptide: NAC domain-containing protein 75 (498 aa).

The region spanning 48 to 215 (LPAGVKFDPT…ELVVSKIFYQ (168 aa)) is the NAC domain. Residues 166-221 (KGCKKILVLYTNFGKNRKPEKTNWVMHQYHLGTHEEEKEGELVVSKIFYQTQPRQC) mediate DNA binding. Disordered regions lie at residues 225-278 (SSTS…PNRS), 338-374 (VMAE…QRHH), 423-443 (QQQL…GGRS), and 457-498 (STTH…DHHG). The span at 233–248 (IGGGGGEASSGGGGGE) shows a compositional bias: gly residues. A compositionally biased stretch (low complexity) spans 256–266 (GTTSGGSCSSS). Over residues 356-374 (HMAHDHHHHHHQQQQQRHH) the composition is skewed to basic residues. Polar residues predominate over residues 466–475 (GSSSMGNQQE).

As to expression, expressed in the vascular cylinder of roots. Expressed in the differentiation zone of the root stele.

It localises to the nucleus. Transcription activator involved in xylem formation. Promotes the expression of the secondary wall-associated transcription factor MYB46. Functions upstream of NAC030/VND7, a master switch of xylem vessel differentiation. Acts as a upstream regulator of NAC101/VND6 and LBD30/ASL19. This chain is NAC domain-containing protein 75, found in Arabidopsis thaliana (Mouse-ear cress).